The chain runs to 523 residues: Bifunctional purine biosynthesis protein PurH (523 aa).

The MGS-like domain maps to 4–152 (DHIRRPIRRA…KNHPSVAVVT (149 aa)).

This sequence belongs to the PurH family.

The catalysed reaction is (6R)-10-formyltetrahydrofolate + 5-amino-1-(5-phospho-beta-D-ribosyl)imidazole-4-carboxamide = 5-formamido-1-(5-phospho-D-ribosyl)imidazole-4-carboxamide + (6S)-5,6,7,8-tetrahydrofolate. It carries out the reaction IMP + H2O = 5-formamido-1-(5-phospho-D-ribosyl)imidazole-4-carboxamide. It functions in the pathway purine metabolism; IMP biosynthesis via de novo pathway; 5-formamido-1-(5-phospho-D-ribosyl)imidazole-4-carboxamide from 5-amino-1-(5-phospho-D-ribosyl)imidazole-4-carboxamide (10-formyl THF route): step 1/1. The protein operates within purine metabolism; IMP biosynthesis via de novo pathway; IMP from 5-formamido-1-(5-phospho-D-ribosyl)imidazole-4-carboxamide: step 1/1. In Mycobacterium marinum (strain ATCC BAA-535 / M), this protein is Bifunctional purine biosynthesis protein PurH.